The sequence spans 1269 residues: Regulator of nonsense transcripts 2 (1269 aa).

Disordered stretches follow at residues 1-125 (MPAE…EKEE) and 143-162 (LRSK…FFSR). Positions 57 to 133 (KKRLEEDKRK…EESLQLHQEA (77 aa)) form a coiled coil. The sufficient for interaction with UPF1 stretch occupies residues 94 to 132 (KKKQEEEERKKQEEQAKRQQEEAAAQLKEKEESLQLHQE). The region spanning 168–396 (KKNTAFVKKL…KGELSEDRHK (229 aa)) is the MIF4G 1 domain. Disordered stretches follow at residues 422-444 (NMPD…DIFT) and 487-518 (KSQN…DLEL). Basic and acidic residues-rich tracts occupy residues 427–438 (PQDKPTPEEHGP) and 487–511 (KSQN…KEAS). MIF4G domains lie at 571–755 (QQLP…YCNP) and 774–984 (RKLL…LRPK). Residues 709–926 (GRFLFRSPES…IRLVCTILDT (218 aa)) are sufficient for interaction with UPF3A and UPF3B. A sufficient for interaction with EIF4A1 and EIF1 region spans residues 755–1269 (PPPAEKTVRK…LIFKTGGRRR (515 aa)). The tract at residues 837–857 (EDVGIHVVDGVLEDIRLGMEV) is binds to UPF3B. The interval 1017-1090 (SKDSMTEGEN…KENETDEENA (74 aa)) is disordered. Residues 1025–1073 (ENLEEDEEEEEGGAETEEQSGNESEVNEPEEEEGSEEEEEGEEEEEENT) show a composition bias toward acidic residues. Residues 1081–1269 (KENETDEENA…LIFKTGGRRR (189 aa)) form a sufficient for interaction with UPF1 C-terminus region. At Thr1085 the chain carries Phosphothreonine. Interaction with UPF1 stretches follow at residues 1102-1126 (VPCV…QQRS) and 1164-1204 (DTMP…AEQE). The interval 1102-1195 (VPCVEDEDFI…PMSSQLAANH (94 aa)) is necessary for interaction with UPF1. Positions 1218-1269 (ERQEQEDYQEMLQSLAQRPAPANTNRERRPRYQHPKGAPNADLIFKTGGRRR) are disordered.

Found in a post-splicing messenger ribonucleoprotein (mRNP) complex. Associates with the exon junction complex (EJC). Interacts with SMG1, EST1A, UPF3A, UPF3B, EIF4A1 and EIF1. Interacts with UPF1; interaction is promoted by TDRD6. Interacts with DDX4. As to expression, localized in male germ cells.

The protein resides in the cytoplasm. Its subcellular location is the perinuclear region. Functionally, involved in nonsense-mediated decay (NMD) of mRNAs containing premature stop codons by associating with the nuclear exon junction complex (EJC). Recruited by UPF3B associated with the EJC core at the cytoplasmic side of the nuclear envelope and the subsequent formation of an UPF1-UPF2-UPF3 surveillance complex (including UPF1 bound to release factors at the stalled ribosome) is believed to activate NMD. In cooperation with UPF3B stimulates both ATPase and RNA helicase activities of UPF1. Binds spliced mRNA. In Mus musculus (Mouse), this protein is Regulator of nonsense transcripts 2.